The chain runs to 287 residues: 3-methyl-2-oxobutanoate hydroxymethyltransferase (287 aa).

Positions 67 and 106 each coordinate Mg(2+). 3-methyl-2-oxobutanoate-binding positions include 67–68, Asp106, and Lys136; that span reads DS. Mg(2+) is bound at residue Glu138. Glu204 functions as the Proton acceptor in the catalytic mechanism.

It belongs to the PanB family. Homodecamer; pentamer of dimers. It depends on Mg(2+) as a cofactor.

It localises to the cytoplasm. The enzyme catalyses 3-methyl-2-oxobutanoate + (6R)-5,10-methylene-5,6,7,8-tetrahydrofolate + H2O = 2-dehydropantoate + (6S)-5,6,7,8-tetrahydrofolate. The protein operates within cofactor biosynthesis; (R)-pantothenate biosynthesis; (R)-pantoate from 3-methyl-2-oxobutanoate: step 1/2. Functionally, catalyzes the reversible reaction in which hydroxymethyl group from 5,10-methylenetetrahydrofolate is transferred onto alpha-ketoisovalerate to form ketopantoate. The polypeptide is 3-methyl-2-oxobutanoate hydroxymethyltransferase (Streptomyces avermitilis (strain ATCC 31267 / DSM 46492 / JCM 5070 / NBRC 14893 / NCIMB 12804 / NRRL 8165 / MA-4680)).